A 959-amino-acid chain; its full sequence is Translation initiation factor IF-2 (959 aa).

The segment covering 1 to 10 (MSDKTNDDKT) has biased composition (basic and acidic residues). The tract at residues 1 to 374 (MSDKTNDDKT…SQMQETREKI (374 aa)) is disordered. Polar residues predominate over residues 27 to 37 (EQSTVRQNFSH). 2 stretches are compositionally biased toward low complexity: residues 63–118 (AAAA…VTKP) and 128–138 (QRPGGQQAQRP). Basic and acidic residues-rich tracts occupy residues 154-225 (SEMD…EAAK) and 232-241 (ARSERRDDAR). Residues 246–284 (GARPQQAGRPQGGRPQPAGRPQQGSPRPAPIIADAAPIA) are compositionally biased toward low complexity. Residues 318-333 (PEVRAPKVVKGEDDRR) show a composition bias toward basic and acidic residues. One can recognise a tr-type G domain in the interval 457-626 (SRPPVVTIMG…LLQAEMLDLK (170 aa)). The interval 466–473 (GHVDHGKT) is G1. 466 to 473 (GHVDHGKT) contributes to the GTP binding site. A G2 region spans residues 491–495 (GITQH). The segment at 512–515 (DTPG) is G3. GTP contacts are provided by residues 512–516 (DTPGH) and 566–569 (NKID). The segment at 566–569 (NKID) is G4. Positions 602–604 (SAK) are G5.

Belongs to the TRAFAC class translation factor GTPase superfamily. Classic translation factor GTPase family. IF-2 subfamily.

It localises to the cytoplasm. Its function is as follows. One of the essential components for the initiation of protein synthesis. Protects formylmethionyl-tRNA from spontaneous hydrolysis and promotes its binding to the 30S ribosomal subunits. Also involved in the hydrolysis of GTP during the formation of the 70S ribosomal complex. The polypeptide is Translation initiation factor IF-2 (Brucella melitensis biotype 1 (strain ATCC 23456 / CCUG 17765 / NCTC 10094 / 16M)).